We begin with the raw amino-acid sequence, 573 residues long: MSHAAEPAQDGVEASAEGPRAVFLLLEDRRPADSAQLLSLNSLLPESGIVADIELENVLDPDSFYELKSPPLSLRSSLPISLQATPATPATLSASSSAEGSRTPAMSSSSSSRVLLRQQLMRAQAQEQERRERREQASSFPSPAPASPAISVVGVSAGGHTLGRPPPAQVPREVLKVQTHLENPTRYHLQQARRQQVKQYLSTTLGPKLASQALTPPPGGASVQPLPTPEAAHAPGPTSSAPNSPMALLTIGSSSEKEIDDVIDEIISLESSYNDEMLSYLPGGNTGLQLPSTLPVSGNLLDVYNNQGVATPAITVSNSCPAELPNIKREISETEAKALLKERQKKDNHNLIERRRRFNINDRIKELGTLIPKSSDPEMRWNKGTILKASVDYIRKLQKEQQRSKDLESRQRSLEQANRSLQLRIQELELQAQIHGLPVPPTPGLLSLAATSASDSLKPEQLDVEEEGRPGTAIFHATGGLAQSAPHQQPPPPPSDALLDLHFPSDHLGDLGDPFHLGLEDILMEEEEGVVGGLSGGTLSPLRAASDPLLSSVSPAVSKASSRRSSFSMEEES.

Position 47 is a phosphoserine; by MTOR (Ser47). Residues 91–151 are disordered; that stretch reads TLSASSSAEG…SPAPASPAIS (61 aa). The segment covering 107 to 126 has biased composition (low complexity); sequence SSSSSSRVLLRQQLMRAQAQ. A compositionally biased stretch (basic and acidic residues) spans 127-136; the sequence is EQERRERREQ. Residues 137-151 show a composition bias toward low complexity; that stretch reads ASSFPSPAPASPAIS. An Asymmetric dimethylarginine modification is found at Arg186. The interval 209–248 is disordered; it reads LASQALTPPPGGASVQPLPTPEAAHAPGPTSSAPNSPMAL. The tract at residues 258–269 is strong transcription activation domain; the sequence is EIDDVIDEIISL. Ser319 is subject to Phosphoserine; by MTOR. Lys337 is covalently cross-linked (Glycyl lysine isopeptide (Lys-Gly) (interchain with G-Cter in SUMO2)). The 54-residue stretch at 344–397 folds into the bHLH domain; sequence QKKDNHNLIERRRRFNINDRIKELGTLIPKSSDPEMRWNKGTILKASVDYIRKL. The Nuclear localization signal signature appears at 354–357; it reads RRRR. The leucine-zipper stretch occupies residues 407–428; the sequence is LESRQRSLEQANRSLQLRIQEL. The disordered stretch occupies residues 531–573; that stretch reads VGGLSGGTLSPLRAASDPLLSSVSPAVSKASSRRSSFSMEEES. Residues 537 to 573 are compositionally biased toward low complexity; the sequence is GTLSPLRAASDPLLSSVSPAVSKASSRRSSFSMEEES. Residues Ser540, Ser546, Ser552, Ser554, Ser558, and Ser566 each carry the phosphoserine modification.

Belongs to the MiT/TFE family. Homodimer and heterodimer; with TFEB or MITF. Interacts with RRAGC/RagC GDP-bound and RRAGD/RagD GDP-bound; promoting its recruitment to lysosomal membrane in the presence of nutrients. Post-translationally, phosphorylation ar Ser-47 and Ser-319 by MTOR via non-canonical mTORC1 pathway regulates its stability and subcellular location, respectively. When nutrients are present, phosphorylation by MTOR at Ser-47 promotes ubiquitination by the SCF(BTRC) complex, followed by degradation. When nutrients are present, phosphorylation by MTOR at Ser-319 also promotes association with 14-3-3/YWHA adapters and retention in the cytosol. Phosphorylation at Ser-47 plays a more critical role than phosphorylation at Ser-319 for TFE3 inactivation. Inhibition of mTORC1, starvation and lysosomal disruption, promotes dephosphorylation and transcription factor activity. Ubiquitinated by the SCF(BTRC) and SCF(FBXW11) complexes following phosphorylation at Ser-47 by MTOR, leading to its degradation by the proteasome. In terms of processing, sumoylated; does not affect dimerization with MITF.

The protein resides in the cytoplasm. The protein localises to the cytosol. It is found in the nucleus. Its subcellular location is the lysosome membrane. Its function is as follows. Transcription factor that acts as a master regulator of lysosomal biogenesis and immune response. Specifically recognizes and binds E-box sequences (5'-CANNTG-3'); efficient DNA-binding requires dimerization with itself or with another MiT/TFE family member such as TFEB or MITF. Involved in the cellular response to amino acid availability by acting downstream of MTOR: in the presence of nutrients, TFE3 phosphorylation by MTOR promotes its inactivation. Upon starvation or lysosomal stress, inhibition of MTOR induces TFE3 dephosphorylation, resulting in transcription factor activity. Specifically recognizes and binds the CLEAR-box sequence (5'-GTCACGTGAC-3') present in the regulatory region of many lysosomal genes, leading to activate their expression, thereby playing a central role in expression of lysosomal genes. Maintains the pluripotent state of embryonic stem cells by promoting the expression of genes such as ESRRB; mTOR-dependent TFE3 cytosolic retention and inactivation promotes exit from pluripotency. Required to maintain the naive pluripotent state of hematopoietic stem cell; mTOR-dependent cytoplasmic retention of TFE3 promotes the exit of hematopoietic stem cell from pluripotency. TFE3 activity is also involved in the inhibition of neuronal progenitor differentiation. Acts as a positive regulator of browning of adipose tissue by promoting expression of target genes; mTOR-dependent phosphorylation promotes cytoplasmic retention of TFE3 and inhibits browning of adipose tissue. In association with TFEB, activates the expression of CD40L in T-cells, thereby playing a role in T-cell-dependent antibody responses in activated CD4(+) T-cells and thymus-dependent humoral immunity. Specifically recognizes the MUE3 box, a subset of E-boxes, present in the immunoglobulin enhancer. It also binds very well to a USF/MLTF site. May regulate lysosomal positioning in response to nutrient deprivation by promoting the expression of PIP4P1. The sequence is that of Transcription factor E3 from Bos taurus (Bovine).